Reading from the N-terminus, the 179-residue chain is Large ribosomal subunit protein uL5 (179 aa).

This sequence belongs to the universal ribosomal protein uL5 family. As to quaternary structure, part of the 50S ribosomal subunit; part of the 5S rRNA/L5/L18/L25 subcomplex. Contacts the 5S rRNA and the P site tRNA. Forms a bridge to the 30S subunit in the 70S ribosome.

In terms of biological role, this is one of the proteins that bind and probably mediate the attachment of the 5S RNA into the large ribosomal subunit, where it forms part of the central protuberance. In the 70S ribosome it contacts protein S13 of the 30S subunit (bridge B1b), connecting the 2 subunits; this bridge is implicated in subunit movement. Contacts the P site tRNA; the 5S rRNA and some of its associated proteins might help stabilize positioning of ribosome-bound tRNAs. This Xylella fastidiosa (strain 9a5c) protein is Large ribosomal subunit protein uL5.